A 52-amino-acid polypeptide reads, in one-letter code: Ornatin-C (52 aa).

The Cell attachment site motif lies at 42-44 (RGD).

The protein belongs to the ornatin family.

Its subcellular location is the secreted. Functionally, potent inhibitor of fibrinogen interaction with platelet receptors expressed on glycoprotein IIb-IIIa complex. May prevent blood from clotting during either feeding and/or storage of ingested blood. This Placobdella ornata (Turtle leech) protein is Ornatin-C.